Reading from the N-terminus, the 141-residue chain is Putative pre-16S rRNA nuclease (141 aa).

The protein belongs to the YqgF nuclease family.

It is found in the cytoplasm. Could be a nuclease involved in processing of the 5'-end of pre-16S rRNA. The chain is Putative pre-16S rRNA nuclease from Chlorobium luteolum (strain DSM 273 / BCRC 81028 / 2530) (Pelodictyon luteolum).